Consider the following 249-residue polypeptide: Chromosome-partitioning ATPase Soj (249 aa).

The ATP site is built by Lys-15, Gly-16, Gly-17, Val-18, Gly-19, Lys-20, Thr-21, Thr-22, Pro-207, and Asn-209. Gly-17 serves as a coordination point for ADP. The ADP site is built by Gly-19, Lys-20, Thr-21, Thr-22, Pro-207, and Asn-209. Thr-21 provides a ligand contact to Mg(2+).

This sequence belongs to the ParA family. Monomer in the absence of nucleotides or presence of ADP, in the presence of ATP is found in a monomer-dimer equilibrium. ATP-binding is required for DNA-binding. Probably interacts with Spo0J.

It carries out the reaction ATP + H2O = ADP + phosphate + H(+). ATPase activity is stimulated 10-fold in the presence of Spo0J and parS DNA (a plasmid centromere-like site or plasmid DNA itself). The first 20 residues of Spo0J stimulate its ATPase activity by 8%. Its function is as follows. ATPase probably involved in chromosome partitioning. Cooperatively binds dsDNA, forming nucleoprotein filaments in a strictly ATP-dependent fashion. Can also bind ssDNA with lower affinity. The polypeptide is Chromosome-partitioning ATPase Soj (Thermus thermophilus (strain ATCC BAA-163 / DSM 7039 / HB27)).